Here is a 110-residue protein sequence, read N- to C-terminus: UPF0145 protein Blon_0093/BLIJ_0092 (110 aa).

The protein belongs to the UPF0145 family.

This chain is UPF0145 protein Blon_0093/BLIJ_0092, found in Bifidobacterium longum subsp. infantis (strain ATCC 15697 / DSM 20088 / JCM 1222 / NCTC 11817 / S12).